A 525-amino-acid polypeptide reads, in one-letter code: GMP synthase [glutamine-hydrolyzing] (525 aa).

The Glutamine amidotransferase type-1 domain occupies 9 to 207; that stretch reads RILILDFGSQ…VRDICQCEAL (199 aa). Cys-86 (nucleophile) is an active-site residue. Active-site residues include His-181 and Glu-183. In terms of domain architecture, GMPS ATP-PPase spans 208-400; it reads WTPAKIIDDA…LGLPYNMLYR (193 aa). 235-241 contacts ATP; the sequence is SGGVDSS.

In terms of assembly, homodimer.

The enzyme catalyses XMP + L-glutamine + ATP + H2O = GMP + L-glutamate + AMP + diphosphate + 2 H(+). The protein operates within purine metabolism; GMP biosynthesis; GMP from XMP (L-Gln route): step 1/1. In terms of biological role, catalyzes the synthesis of GMP from XMP. The sequence is that of GMP synthase [glutamine-hydrolyzing] from Pectobacterium carotovorum subsp. carotovorum (strain PC1).